The sequence spans 689 residues: Methionine--tRNA ligase (689 aa).

The 'HIGH' region signature appears at 15 to 25 (PYANGPVHIGH). Positions 147, 150, 160, and 163 each coordinate Zn(2+). The short motif at 342-346 (KISTS) is the 'KMSKS' region element. Residue Thr-345 participates in ATP binding. The tRNA-binding domain maps to 588–689 (DFAKMDIRVA…AVVNAGSMIG (102 aa)).

The protein belongs to the class-I aminoacyl-tRNA synthetase family. MetG type 1 subfamily. As to quaternary structure, homodimer. The cofactor is Zn(2+).

Its subcellular location is the cytoplasm. The catalysed reaction is tRNA(Met) + L-methionine + ATP = L-methionyl-tRNA(Met) + AMP + diphosphate. In terms of biological role, is required not only for elongation of protein synthesis but also for the initiation of all mRNA translation through initiator tRNA(fMet) aminoacylation. This is Methionine--tRNA ligase from Cytophaga hutchinsonii (strain ATCC 33406 / DSM 1761 / CIP 103989 / NBRC 15051 / NCIMB 9469 / D465).